A 157-amino-acid polypeptide reads, in one-letter code: Ribonuclease H (157 aa).

The 142-residue stretch at 3-144 folds into the RNase H type-1 domain; it reads NSKTVHLYTD…CDELARDAAT (142 aa). Mg(2+)-binding residues include aspartate 12, glutamate 50, aspartate 72, and aspartate 136.

This sequence belongs to the RNase H family. In terms of assembly, monomer. Mg(2+) serves as cofactor.

The protein localises to the cytoplasm. The enzyme catalyses Endonucleolytic cleavage to 5'-phosphomonoester.. Its function is as follows. Endonuclease that specifically degrades the RNA of RNA-DNA hybrids. The sequence is that of Ribonuclease H from Idiomarina loihiensis (strain ATCC BAA-735 / DSM 15497 / L2-TR).